Here is a 279-residue protein sequence, read N- to C-terminus: Gas vesicle protein L2 (279 aa).

The protein belongs to the gas vesicle GvpF/GvpL family. As to quaternary structure, gvpF to GvpM interact with each other in vitro, and may form multi-subunit complex(es). Interacts with GvpC, GvpN and GvpO.

Its subcellular location is the gas vesicle. Proteins GvpF to GvpM might be involved in nucleating gas vesicle formation. A minor component of the gas vesicle. Gas vesicles are hollow, gas filled proteinaceous nanostructures found in several microbial planktonic microorganisms. They allow positioning of halobacteria at the optimal depth for growth in the poorly aerated, shallow brine pools of their habitat. Functionally, expression of 2 c-vac DNA fragments containing 2 divergently transcribed regions (gvpE-gvpF-gvpG-gvpH-gvpI-gvpJ-gvpK-gvpL-gvpM and gvpA-gvpC-gvpN-gvpO) allows H.volcanii to produce gas vesicles. The protein is Gas vesicle protein L2 of Halobacterium salinarum (strain ATCC 700922 / JCM 11081 / NRC-1) (Halobacterium halobium).